We begin with the raw amino-acid sequence, 389 residues long: S-adenosylmethionine synthase (389 aa).

Residue H17 participates in ATP binding. A Mg(2+)-binding site is contributed by D19. E45 contacts K(+). The L-methionine site is built by E58 and Q101. The interval 101–111 is flexible loop; it reads QSPDISQGVTE. ATP contacts are provided by residues 168–170, 234–235, D243, 249–250, A266, and K270; these read DSK, RF, and RK. D243 is a binding site for L-methionine. K274 contacts L-methionine.

The protein belongs to the AdoMet synthase family. Homotetramer; dimer of dimers. Requires Mg(2+) as cofactor. It depends on K(+) as a cofactor.

It localises to the cytoplasm. The catalysed reaction is L-methionine + ATP + H2O = S-adenosyl-L-methionine + phosphate + diphosphate. It participates in amino-acid biosynthesis; S-adenosyl-L-methionine biosynthesis; S-adenosyl-L-methionine from L-methionine: step 1/1. Catalyzes the formation of S-adenosylmethionine (AdoMet) from methionine and ATP. The overall synthetic reaction is composed of two sequential steps, AdoMet formation and the subsequent tripolyphosphate hydrolysis which occurs prior to release of AdoMet from the enzyme. The chain is S-adenosylmethionine synthase from Geobacter sulfurreducens (strain ATCC 51573 / DSM 12127 / PCA).